The chain runs to 211 residues: Ribosomal RNA small subunit methyltransferase G (211 aa).

S-adenosyl-L-methionine is bound by residues Gly75, Leu80, 130–131, and Arg145; that span reads VE.

This sequence belongs to the methyltransferase superfamily. RNA methyltransferase RsmG family.

It localises to the cytoplasm. The enzyme catalyses guanosine(527) in 16S rRNA + S-adenosyl-L-methionine = N(7)-methylguanosine(527) in 16S rRNA + S-adenosyl-L-homocysteine. Its function is as follows. Specifically methylates the N7 position of guanine in position 527 of 16S rRNA. The polypeptide is Ribosomal RNA small subunit methyltransferase G (Aromatoleum aromaticum (strain DSM 19018 / LMG 30748 / EbN1) (Azoarcus sp. (strain EbN1))).